The sequence spans 238 residues: Urease subunit alpha (238 aa).

The segment at 1–102 (MKLTPKELDK…LVTVHTPIEA (102 aa)) is urease gamma. A urease beta region spans residues 103-238 (NGKLVPGELF…DDNYVKTIKE (136 aa)).

The protein in the N-terminal section; belongs to the urease gamma subunit family. This sequence in the C-terminal section; belongs to the urease beta subunit family. In terms of assembly, heterohexamer of 3 UreA (alpha) and 3 UreB (beta) subunits. Four heterohexamers assemble to form a 16 nm dodecameric complex.

It carries out the reaction urea + 2 H2O + H(+) = hydrogencarbonate + 2 NH4(+). It functions in the pathway nitrogen metabolism; urea degradation; CO(2) and NH(3) from urea (urease route): step 1/1. The chain is Urease subunit alpha from Helicobacter pylori (strain J99 / ATCC 700824) (Campylobacter pylori J99).